Reading from the N-terminus, the 125-residue chain is Ribosome maturation factor RimP (125 aa).

The protein belongs to the RimP family.

The protein localises to the cytoplasm. Functionally, required for maturation of 30S ribosomal subunits. This Rickettsia canadensis (strain McKiel) protein is Ribosome maturation factor RimP.